Here is a 945-residue protein sequence, read N- to C-terminus: Glutamyl aminopeptidase (945 aa).

At 1–18 (MNFAEEEPSKKYCIKGKH) the chain is on the cytoplasmic side. Residues 19 to 39 (VAIICGVVVAVGLIVGLSVGL) traverse the membrane as a helical; Signal-anchor for type II membrane protein segment. The Extracellular portion of the chain corresponds to 40 to 945 (TRSCEQDTTP…SIREWFASLP (906 aa)). The interval 43-77 (CEQDTTPAPSQPPPEASTALPPQDQNVCPDSEDES) is disordered. N-linked (GlcNAc...) asparagine glycans are attached at residues asparagine 116 and asparagine 189. Glutamate 215 provides a ligand contact to substrate. Asparagine 316 is a glycosylation site (N-linked (GlcNAc...) asparagine). 349-353 (GAMEN) lines the substrate pocket. Histidine 385 serves as a coordination point for Zn(2+). The active-site Proton acceptor is glutamate 386. Zn(2+) is bound by residues histidine 389 and glutamate 408. 6 N-linked (GlcNAc...) asparagine glycosylation sites follow: asparagine 546, asparagine 601, asparagine 637, asparagine 669, asparagine 754, and asparagine 792. Residue arginine 878 coordinates substrate.

This sequence belongs to the peptidase M1 family. Homodimer; disulfide-linked. Zn(2+) serves as cofactor. Early B-lineage cells and certain stromal cell of hemopoietic tissues. Also expressed by capillary endothelial cells, placenta, and epithelial cells of the intestine and proximal renal tubules.

The protein resides in the cell membrane. The catalysed reaction is Release of N-terminal glutamate (and to a lesser extent aspartate) from a peptide.. Substrate specificity is modulated by calcium which enhances the enzymatic activity for cleavage of acidic residues while reducing its activity with basic residues. Inhibited by aminopeptidase inhibitors amastatin and bestatin. In terms of biological role, regulates central hypertension through its calcium-modulated preference to cleave N-terminal acidic residues from peptides such as angiotensin II. The sequence is that of Glutamyl aminopeptidase (Enpep) from Mus musculus (Mouse).